Here is a 678-residue protein sequence, read N- to C-terminus: MWKLLLWVGLVLVLKHHDGAAHKLVCYFTNWAHSRPGPASILPHDLDPFLCTHLIFAFASMNNNQIVAKDLQDEKILYPEFNKLKERNRELKTLLSIGGWNFGTSRFTTMLSTFANREKFIASVISLLRTHDFDGLDLFFLYPGLRGSPMHDRWTFLFLIEELLFAFRKEALLTMRPRLLLSAAVSGVPHIVQTSYDVRFLGRLLDFINVLSYDLHGSWERFTGHNSPLFSLPEDPKSSAYAMNYWRKLGAPSEKLIMGIPTYGRTFRLLKASKNGLQARAIGPASPGKYTKQEGFLAYFEICSFVWGAKKHWIDYQYVPYANKGKEWVGYDNAISFSYKAWFIRREHFGGAMVWTLDMDDVRGTFCGTGPFPLVYVLNDILVRAEFSSTSLPQFWLSSAVNSSSTDPERLAVTTAWTTDSKILPPGGEAGVTEIHGKCENMTITPRGTTVTPTKETVSLGKHTVALGEKTEITGAMTMTSVGHQSMTPGEKALTPVGHQSVTTGQKTLTSVGYQSVTPGEKTLTPVGHQSVTPVSHQSVSPGGTTMTPVHFQTETLRQNTVAPRRKAVAREKVTVPSRNISVTPEGQTMPLRGENLTSEVGTHPRMGNLGLQMEAENRMMLSSSPVIQLPEQTPLAFDNRFVPIYGNHSSVNSVTPQTSPLSLKKEIPENSAVDEEA.

The signal sequence occupies residues 1 to 21 (MWKLLLWVGLVLVLKHHDGAA). The GH18 domain maps to 22–385 (HKLVCYFTNW…YVLNDILVRA (364 aa)). A disulfide bridge links Cys-26 with Cys-51. Chitin is bound by residues 71–72 (LQ), 98–101 (GGWN), Tyr-142, 211–214 (LSYD), and Trp-355. N-linked (GlcNAc...) asparagine glycans are attached at residues Asn-402 and Asn-441. Residues 524 to 544 (LTPVGHQSVTPVSHQSVSPGG) form a disordered region. A compositionally biased stretch (polar residues) spans 528–544 (GHQSVTPVSHQSVSPGG). N-linked (GlcNAc...) asparagine glycans are attached at residues Asn-580, Asn-596, and Asn-648. A disordered region spans residues 581–606 (ISVTPEGQTMPLRGENLTSEVGTHPR). Polar residues predominate over residues 651 to 662 (SVNSVTPQTSPL). Positions 651–678 (SVNSVTPQTSPLSLKKEIPENSAVDEEA) are disordered.

Belongs to the glycosyl hydrolase 18 family. In terms of tissue distribution, oviduct.

Its subcellular location is the cytoplasmic vesicle. The protein resides in the secretory vesicle. Binds to oocyte zona pellucida in vivo. May play a role in the fertilization process and/or early embryonic development. In Homo sapiens (Human), this protein is Oviduct-specific glycoprotein (OVGP1).